Consider the following 353-residue polypeptide: MEEQTTNVIQIYVNGTEQFNASFDFNITDVKESTDTYEFYIIGLFLSCLYTIFLFPIGFIGNILILVVNLNHRERMTIPDLYFVNLAVADLILVADSLIEVFNLNEKYYDYAVLCTFMSLFLQVNMYSSIFFLTWMSFDRYVALTSSMSSSPLRTMQHAKLSCSLIWMASILATLLPFTIVQTQHTGEVHFCFANVFEIQWLEVTIGFLIPFSIIGLCYSLIVRTLMRAQKHKGLWPRRQKALRMIVVVVLVFFICWLPENVFISIQLLQGTADPSKRTDTTLWHDYPLTGHIVNLAAFSNSCLNPIIYSFLGETFRDKLRLFIKRKASWSVVYRFCNHTLDLQIPVRSESEV.

Residues 1–40 lie on the Extracellular side of the membrane; it reads MEEQTTNVIQIYVNGTEQFNASFDFNITDVKESTDTYEFY. The helical transmembrane segment at 41–61 threads the bilayer; the sequence is IIGLFLSCLYTIFLFPIGFIG. The Cytoplasmic portion of the chain corresponds to 62–81; the sequence is NILILVVNLNHRERMTIPDL. A helical transmembrane segment spans residues 82–102; it reads YFVNLAVADLILVADSLIEVF. Residues 103–112 lie on the Extracellular side of the membrane; that stretch reads NLNEKYYDYA. A helical transmembrane segment spans residues 113-133; that stretch reads VLCTFMSLFLQVNMYSSIFFL. An intrachain disulfide couples Cys-115 to Cys-192. Residues 134-160 are Cytoplasmic-facing; it reads TWMSFDRYVALTSSMSSSPLRTMQHAK. Residues 161 to 181 traverse the membrane as a helical segment; that stretch reads LSCSLIWMASILATLLPFTIV. At 182–202 the chain is on the extracellular side; it reads QTQHTGEVHFCFANVFEIQWL. The chain crosses the membrane as a helical span at residues 203–223; sequence EVTIGFLIPFSIIGLCYSLIV. At 224-245 the chain is on the cytoplasmic side; the sequence is RTLMRAQKHKGLWPRRQKALRM. The chain crosses the membrane as a helical span at residues 246-266; it reads IVVVVLVFFICWLPENVFISI. The Extracellular segment spans residues 267–292; the sequence is QLLQGTADPSKRTDTTLWHDYPLTGH. Residues 293–313 traverse the membrane as a helical segment; sequence IVNLAAFSNSCLNPIIYSFLG. The Cytoplasmic portion of the chain corresponds to 314-353; that stretch reads ETFRDKLRLFIKRKASWSVVYRFCNHTLDLQIPVRSESEV.

The protein belongs to the G-protein coupled receptor 1 family. As to quaternary structure, homodimer. Heterodimer. In terms of tissue distribution, expressed in brain regions that are known to control reproduction and sex behavior. Expressed in ovary, muscle and intestine. Expressed in early germ cells of the testis, including the spermatogonia, spermatocytes, and somatic cells such as Sertoli cells.

The protein resides in the nucleus. It localises to the cytoplasm. The protein localises to the perinuclear region. It is found in the cytoskeleton. Its subcellular location is the cytoplasmic vesicle membrane. The protein resides in the cell membrane. It localises to the basolateral cell membrane. The protein localises to the endoplasmic reticulum membrane. It is found in the early endosome. Its subcellular location is the recycling endosome. The protein resides in the golgi apparatus. It localises to the trans-Golgi network. The protein localises to the golgi apparatus membrane. It is found in the cell projection. Its subcellular location is the dendrite. The protein resides in the dendritic spine membrane. It localises to the axon. The protein localises to the postsynaptic density. It is found in the mitochondrion membrane. In terms of biological role, membrane G-protein coupled estrogen receptor that binds to 17-beta-estradiol (E2) with high affinity, leading to rapid and transient activation of numerous intracellular signaling pathways. Plays a role in the embryonic development of sensory and motor neurons. Specifically induces apoptosis and reduces proliferation of brain cells. Involved in maintenance of meiotic arrest in oocytes. The polypeptide is G-protein coupled estrogen receptor 1 (gper1) (Danio rerio (Zebrafish)).